Here is a 279-residue protein sequence, read N- to C-terminus: Large ribosomal subunit protein mL46 (279 aa).

Lys-230 carries the N6-acetyllysine modification.

This sequence belongs to the mitochondrion-specific ribosomal protein mL46 family. In terms of assembly, component of the mitochondrial large ribosomal subunit (mt-LSU). Mature mammalian 55S mitochondrial ribosomes consist of a small (28S) and a large (39S) subunit. The 28S small subunit contains a 12S ribosomal RNA (12S mt-rRNA) and 30 different proteins. The 39S large subunit contains a 16S rRNA (16S mt-rRNA), a copy of mitochondrial valine transfer RNA (mt-tRNA(Val)), which plays an integral structural role, and 52 different proteins. mL46 is located at the central protuberance.

It localises to the mitochondrion. The protein is Large ribosomal subunit protein mL46 (MRPL46) of Homo sapiens (Human).